Consider the following 429-residue polypeptide: Serine carboxypeptidase-like (429 aa).

Disulfide bonds link Cys-58–Cys-298, Cys-226–Cys-241, and Cys-264–Cys-269. N-linked (GlcNAc...) asparagine glycosylation occurs at Asn-76. Ser-148 is an active-site residue. Asp-336 is an active-site residue. Cys-339 is a binding site for substrate. The active site involves His-393. 2 N-linked (GlcNAc...) asparagine glycosylation sites follow: Asn-414 and Asn-417.

Belongs to the peptidase S10 family. As to expression, abundant in germinated embryos composed of leaf, root, and scutellum.

The polypeptide is Serine carboxypeptidase-like (CBP31) (Oryza sativa subsp. japonica (Rice)).